The primary structure comprises 402 residues: Protein rds1 (402 aa).

Functionally, may have a function in stress-related responses of the cell. The polypeptide is Protein rds1 (rds1) (Schizosaccharomyces pombe (strain 972 / ATCC 24843) (Fission yeast)).